The chain runs to 207 residues: Small ribosomal subunit protein uS4 (207 aa).

A compositionally biased stretch (basic and acidic residues) spans 29–38; it reads QDKAKFDSKP. The segment at 29-54 is disordered; the sequence is QDKAKFDSKPGQHGRTSGQRTSDYGL. Polar residues predominate over residues 42–52; sequence GRTSGQRTSDY. The 64-residue stretch at 97–160 folds into the S4 RNA-binding domain; that stretch reads SRLDNVVYRM…KKQTRIAEAL (64 aa).

The protein belongs to the universal ribosomal protein uS4 family. As to quaternary structure, part of the 30S ribosomal subunit. Contacts protein S5. The interaction surface between S4 and S5 is involved in control of translational fidelity.

Its function is as follows. One of the primary rRNA binding proteins, it binds directly to 16S rRNA where it nucleates assembly of the body of the 30S subunit. In terms of biological role, with S5 and S12 plays an important role in translational accuracy. The sequence is that of Small ribosomal subunit protein uS4 from Variovorax paradoxus (strain S110).